We begin with the raw amino-acid sequence, 521 residues long: Two-component response regulator ARR11 (521 aa).

Residues 12-127 enclose the Response regulatory domain; the sequence is RVLVVDDDPT…ELKIIWQHVL (116 aa). Asp63 bears the 4-aspartylphosphate mark. The short motif at 192-195 is the Nuclear localization signal element; that stretch reads KKAR. A DNA-binding region (myb-like GARP) is located at residues 195–246; the sequence is RVVWSFELHHKFVNAVNQIGCDHKAGPKKILDLMNVPWLTRENVASHLQKYR.

Belongs to the ARR family. Type-B subfamily. As to quaternary structure, binds the target DNA as a monomer. Two-component system major event consists of a His-to-Asp phosphorelay between a sensor histidine kinase (HK) and a response regulator (RR). In plants, the His-to-Asp phosphorelay involves an additional intermediate named Histidine-containing phosphotransfer protein (HPt). This multistep phosphorelay consists of a His-Asp-His-Asp sequential transfer of a phosphate group between first a His and an Asp of the HK protein, followed by the transfer to a conserved His of the HPt protein and finally the transfer to an Asp in the receiver domain of the RR protein. As to expression, detected in the whole plant. Predominantly expressed in roots and stems.

It is found in the nucleus. Its function is as follows. Transcriptional activator that binds specifically to the DNA sequence 5'-[AG]GATT-3'. Functions as a response regulator involved in His-to-Asp phosphorelay signal transduction system. Phosphorylation of the Asp residue in the receiver domain activates the ability of the protein to promote the transcription of target genes. Could directly activate some type-A response regulators in response to cytokinins. This chain is Two-component response regulator ARR11 (ARR11), found in Arabidopsis thaliana (Mouse-ear cress).